The chain runs to 134 residues: Small ribosomal subunit protein uS8c (134 aa).

The protein belongs to the universal ribosomal protein uS8 family. In terms of assembly, part of the 30S ribosomal subunit.

It localises to the plastid. It is found in the chloroplast. One of the primary rRNA binding proteins, it binds directly to 16S rRNA central domain where it helps coordinate assembly of the platform of the 30S subunit. This Bigelowiella natans (Pedinomonas minutissima) protein is Small ribosomal subunit protein uS8c (rps8).